The sequence spans 478 residues: Proline--tRNA ligase (478 aa).

The protein belongs to the class-II aminoacyl-tRNA synthetase family. ProS type 3 subfamily. Homodimer.

The protein resides in the cytoplasm. The catalysed reaction is tRNA(Pro) + L-proline + ATP = L-prolyl-tRNA(Pro) + AMP + diphosphate. In terms of biological role, catalyzes the attachment of proline to tRNA(Pro) in a two-step reaction: proline is first activated by ATP to form Pro-AMP and then transferred to the acceptor end of tRNA(Pro). This chain is Proline--tRNA ligase, found in Clostridium botulinum (strain Okra / Type B1).